Here is a 458-residue protein sequence, read N- to C-terminus: ATP synthase subunit beta (458 aa).

148–155 (GGAGVGKT) contacts ATP.

This sequence belongs to the ATPase alpha/beta chains family. F-type ATPases have 2 components, CF(1) - the catalytic core - and CF(0) - the membrane proton channel. CF(1) has five subunits: alpha(3), beta(3), gamma(1), delta(1), epsilon(1). CF(0) has three main subunits: a(1), b(2) and c(9-12). The alpha and beta chains form an alternating ring which encloses part of the gamma chain. CF(1) is attached to CF(0) by a central stalk formed by the gamma and epsilon chains, while a peripheral stalk is formed by the delta and b chains.

The protein resides in the cell inner membrane. The catalysed reaction is ATP + H2O + 4 H(+)(in) = ADP + phosphate + 5 H(+)(out). Its function is as follows. Produces ATP from ADP in the presence of a proton gradient across the membrane. The catalytic sites are hosted primarily by the beta subunits. This Legionella pneumophila (strain Paris) protein is ATP synthase subunit beta.